The chain runs to 284 residues: Tropomyosin (284 aa).

Disordered stretches follow at residues 1–27 and 99–131; these read MDAI…QMEQ and YERS…KVLE. Positions 1 to 273 form a coiled coil; the sequence is MDAIKKKMQA…KERYKAISDD (273 aa). Positions 102–131 are enriched in basic and acidic residues; it reads SEEKLNSTTEKLEEASKAADESERNRKVLE.

It belongs to the tropomyosin family. As to quaternary structure, homodimer.

Its function is as follows. Tropomyosin, in association with the troponin complex, plays a central role in the calcium dependent regulation of muscle contraction. The chain is Tropomyosin from Mimachlamys nobilis (Noble scallop).